We begin with the raw amino-acid sequence, 897 residues long: Protein translocase subunit SecA (897 aa).

Residues glutamine 89, 107 to 111, and aspartate 517 contribute to the ATP site; that span reads GEGKT. The segment covering 839 to 856 has biased composition (polar residues); that stretch reads DDAQATHSNPNEQTKQAS. The tract at residues 839 to 897 is disordered; it reads DDAQATHSNPNEQTKQASITNNIQTQTDQQNTYQRKEKKVGRNEPCPCGSGKKYKKCHG. Low complexity predominate over residues 857 to 870; sequence ITNNIQTQTDQQNT. Zn(2+) is bound by residues cysteine 884, cysteine 886, cysteine 895, and histidine 896.

Belongs to the SecA family. As to quaternary structure, monomer and homodimer. Part of the essential Sec protein translocation apparatus which comprises SecA, SecYEG and auxiliary proteins SecDF-YajC and YidC. Zn(2+) serves as cofactor.

The protein resides in the cell inner membrane. It localises to the cytoplasm. It catalyses the reaction ATP + H2O + cellular proteinSide 1 = ADP + phosphate + cellular proteinSide 2.. Part of the Sec protein translocase complex. Interacts with the SecYEG preprotein conducting channel. Has a central role in coupling the hydrolysis of ATP to the transfer of proteins into and across the cell membrane, serving as an ATP-driven molecular motor driving the stepwise translocation of polypeptide chains across the membrane. In Vesicomyosocius okutanii subsp. Calyptogena okutanii (strain HA), this protein is Protein translocase subunit SecA.